Here is a 237-residue protein sequence, read N- to C-terminus: ADTIVAVELDTYPNTDIGDPSYPHIGIDIKSVRSKKTAKWNMQNGKVGTAHIIYNSVGKRLSAVVSYPNGDSATVSYDVDLDNVLPEWVRVGLSASTGLYKETNTILSWSFTSKLKSNSTHETNALHFMFNQFSKDQKDLILQGDATTGTEGNLRLTRVSSNGSPQGSSVGRALFYAPVHIWESSAVVASFEATFTFLIKSPDSHPADGIAFFISNIDSSIPSGSTGRLLGLFPDAN.

Residues glutamate 8 and aspartate 10 each coordinate Mn(2+). Ca(2+)-binding residues include aspartate 10, tyrosine 12, asparagine 14, and aspartate 19. Residue tyrosine 12 participates in a carbohydrate binding. Positions 19, 24, and 34 each coordinate Mn(2+). 99-100 (LY) is a binding site for a carbohydrate. Aspartate 208 provides a ligand contact to Ca(2+). Arginine 228 contacts a carbohydrate.

The protein belongs to the leguminous lectin family. Homotetramer.

Functionally, glucose/D-mannose specific lectin. Has anti-inflammatory activity in rats. Induces histamine release in mast cells from hamster and rat. Induces lymphocyte proliferation and IFNG production. Shows toxicity against the aquatic snail B.glabrata at concentrations higher than 20 ug/ml. This is Concanavalin-Br from Canavalia brasiliensis (Brazilian jack bean).